The primary structure comprises 579 residues: Laccase-4 (579 aa).

An N-terminal signal peptide occupies residues 1-28 (MTMAISSALPSPLLLAASLLLLIVQAQG). 2 consecutive Plastocyanin-like domains span residues 36–152 (NVQM…PKLG) and 162–316 (KEVP…YENP). Residues Asn-41 and Asn-82 are each glycosylated (N-linked (GlcNAc...) asparagine). Cu cation-binding residues include His-86 and His-88. Residue Asn-118 is glycosylated (N-linked (GlcNAc...) asparagine). The Cu cation site is built by His-131 and His-133. 12 N-linked (GlcNAc...) asparagine glycosylation sites follow: Asn-191, Asn-207, Asn-243, Asn-304, Asn-340, Asn-347, Asn-386, Asn-393, Asn-403, Asn-439, Asn-446, and Asn-462. The 135-residue stretch at 429 to 563 (DFPVAPLSPF…RMAWLVLDGS (135 aa)) folds into the Plastocyanin-like 3 domain. Cu cation-binding residues include His-480, His-483, His-485, His-542, Cys-543, His-544, and His-548.

Belongs to the multicopper oxidase family. Cu cation serves as cofactor.

It localises to the secreted. The protein localises to the extracellular space. It is found in the apoplast. The enzyme catalyses 4 hydroquinone + O2 = 4 benzosemiquinone + 2 H2O. Its function is as follows. Lignin degradation and detoxification of lignin-derived products. In Oryza sativa subsp. japonica (Rice), this protein is Laccase-4 (LAC4).